A 91-amino-acid chain; its full sequence is Small ribosomal subunit protein bS6 (91 aa).

It belongs to the bacterial ribosomal protein bS6 family.

Functionally, binds together with bS18 to 16S ribosomal RNA. In Leptospira interrogans serogroup Icterohaemorrhagiae serovar copenhageni (strain Fiocruz L1-130), this protein is Small ribosomal subunit protein bS6.